A 23-amino-acid polypeptide reads, in one-letter code: Septenin 2 (23 aa).

In terms of tissue distribution, expressed in skin glands.

The protein localises to the secreted. In terms of biological role, may act as an antimicrobial peptide. The sequence is that of Septenin 2 from Osteopilus septentrionalis (Cuban treefrog).